The primary structure comprises 55 residues: MAKDIREKIKLESTAGTGHFYTTTKNKRNMPEKMLIKKFDPVARKHVDYKETKLK.

This sequence belongs to the bacterial ribosomal protein bL33 family.

In Bordetella pertussis (strain Tohama I / ATCC BAA-589 / NCTC 13251), this protein is Large ribosomal subunit protein bL33.